The following is a 144-amino-acid chain: Eukaryotic translation initiation factor 1A (144 aa).

Basic residues predominate over residues 1-15 (MPKNKGKGGKNRKRG). Disordered stretches follow at residues 1-25 (MPKNKGKGGKNRKRGKNEADDDKRE) and 120-144 (DVDGPEEGEGDSDYIQFEDEDIDKI). Residues 16-25 (KNEADDDKRE) are compositionally biased toward basic and acidic residues. Residues 22–96 (DKRELVFKED…DKADVILKYM (75 aa)) form the S1-like domain.

Belongs to the eIF-1A family.

Functionally, seems to be required for maximal rate of protein biosynthesis. Enhances ribosome dissociation into subunits and stabilizes the binding of the initiator Met-tRNA(I) to 40 S ribosomal subunits. The sequence is that of Eukaryotic translation initiation factor 1A from Triticum aestivum (Wheat).